Here is a 208-residue protein sequence, read N- to C-terminus: Uracil phosphoribosyltransferase (208 aa).

5-phospho-alpha-D-ribose 1-diphosphate contacts are provided by residues R78, R103, and 130–138; that span reads DPMLATANS. Uracil is bound by residues I193 and 198–200; that span reads GDA. D199 is a 5-phospho-alpha-D-ribose 1-diphosphate binding site.

The protein belongs to the UPRTase family. Requires Mg(2+) as cofactor.

The enzyme catalyses UMP + diphosphate = 5-phospho-alpha-D-ribose 1-diphosphate + uracil. Its pathway is pyrimidine metabolism; UMP biosynthesis via salvage pathway; UMP from uracil: step 1/1. With respect to regulation, allosterically activated by GTP. Catalyzes the conversion of uracil and 5-phospho-alpha-D-ribose 1-diphosphate (PRPP) to UMP and diphosphate. This is Uracil phosphoribosyltransferase from Brucella canis (strain ATCC 23365 / NCTC 10854 / RM-666).